The primary structure comprises 249 residues: Triosephosphate isomerase (249 aa).

Substrate is bound at residue 11-13; sequence NWK. His91 serves as the catalytic Electrophile. Residue Glu163 is the Proton acceptor of the active site. Substrate contacts are provided by residues Gly169, Ser208, and 229–230; that span reads GG.

It belongs to the triosephosphate isomerase family. As to quaternary structure, homodimer.

It is found in the cytoplasm. It catalyses the reaction D-glyceraldehyde 3-phosphate = dihydroxyacetone phosphate. The protein operates within carbohydrate biosynthesis; gluconeogenesis. It participates in carbohydrate degradation; glycolysis; D-glyceraldehyde 3-phosphate from glycerone phosphate: step 1/1. Functionally, involved in the gluconeogenesis. Catalyzes stereospecifically the conversion of dihydroxyacetone phosphate (DHAP) to D-glyceraldehyde-3-phosphate (G3P). The sequence is that of Triosephosphate isomerase from Pseudoalteromonas translucida (strain TAC 125).